Reading from the N-terminus, the 354-residue chain is Histidinol-phosphate aminotransferase (354 aa).

At Lys222 the chain carries N6-(pyridoxal phosphate)lysine.

Belongs to the class-II pyridoxal-phosphate-dependent aminotransferase family. Histidinol-phosphate aminotransferase subfamily. As to quaternary structure, homodimer. Pyridoxal 5'-phosphate is required as a cofactor.

It catalyses the reaction L-histidinol phosphate + 2-oxoglutarate = 3-(imidazol-4-yl)-2-oxopropyl phosphate + L-glutamate. It functions in the pathway amino-acid biosynthesis; L-histidine biosynthesis; L-histidine from 5-phospho-alpha-D-ribose 1-diphosphate: step 7/9. This is Histidinol-phosphate aminotransferase from Leuconostoc citreum (strain KM20).